Reading from the N-terminus, the 436-residue chain is 3-ketoacyl-CoA thiolase (436 aa).

C99 (acyl-thioester intermediate) is an active-site residue. Active-site proton acceptor residues include H392 and C422.

It belongs to the thiolase-like superfamily. Thiolase family. In terms of assembly, heterotetramer of two alpha chains (FadJ) and two beta chains (FadI).

Its subcellular location is the cytoplasm. The enzyme catalyses an acyl-CoA + acetyl-CoA = a 3-oxoacyl-CoA + CoA. Its pathway is lipid metabolism; fatty acid beta-oxidation. Functionally, catalyzes the final step of fatty acid oxidation in which acetyl-CoA is released and the CoA ester of a fatty acid two carbons shorter is formed. This Shewanella sp. (strain ANA-3) protein is 3-ketoacyl-CoA thiolase.